A 149-amino-acid polypeptide reads, in one-letter code: Prefoldin subunit alpha (149 aa).

The protein belongs to the prefoldin subunit alpha family. As to quaternary structure, heterohexamer of two alpha and four beta subunits.

It is found in the cytoplasm. Its function is as follows. Molecular chaperone capable of stabilizing a range of proteins. Seems to fulfill an ATP-independent, HSP70-like function in archaeal de novo protein folding. This is Prefoldin subunit alpha from Methanospirillum hungatei JF-1 (strain ATCC 27890 / DSM 864 / NBRC 100397 / JF-1).